Reading from the N-terminus, the 93-residue chain is Large ribosomal subunit protein uL23 (93 aa).

Belongs to the universal ribosomal protein uL23 family. Part of the 50S ribosomal subunit. Contacts protein L29, and trigger factor when it is bound to the ribosome.

In terms of biological role, one of the early assembly proteins it binds 23S rRNA. One of the proteins that surrounds the polypeptide exit tunnel on the outside of the ribosome. Forms the main docking site for trigger factor binding to the ribosome. This chain is Large ribosomal subunit protein uL23, found in Nitratiruptor sp. (strain SB155-2).